Reading from the N-terminus, the 1288-residue chain is 5-oxoprolinase (1288 aa).

Residue Thr-151 is modified to Phosphothreonine. Positions 1248–1272 are disordered; that stretch reads PGGGGYGDPEDPAPPPGSPPQALAF. Ser-1265 is modified (phosphoserine).

The protein belongs to the oxoprolinase family. As to quaternary structure, homodimer.

The protein localises to the cytoplasm. It is found in the cytosol. The catalysed reaction is 5-oxo-L-proline + ATP + 2 H2O = L-glutamate + ADP + phosphate + H(+). In terms of biological role, catalyzes the cleavage of 5-oxo-L-proline to form L-glutamate coupled to the hydrolysis of ATP to ADP and inorganic phosphate. The polypeptide is 5-oxoprolinase (Homo sapiens (Human)).